Reading from the N-terminus, the 79-residue chain is CDC42 small effector protein 1 (79 aa).

2 S-palmitoyl cysteine lipidation sites follow: Cys10 and Cys11. The CRIB domain occupies 30–43; it reads IGEPMNFVHLTHIG. The interval 41–79 is disordered; that stretch reads HIGSGDMGASDGLPRAGGVQEQMRSKCGRDRQWSNSGVL. Residues 63-72 show a composition bias toward basic and acidic residues; that stretch reads MRSKCGRDRQ.

Belongs to the CDC42SE/SPEC family.

Its subcellular location is the cytoplasm. It is found in the cytoskeleton. It localises to the cell membrane. Its function is as follows. Probably involved in the organization of the actin cytoskeleton by acting downstream of CDC42, inducing actin filament assembly. The chain is CDC42 small effector protein 1 (cdc42se1) from Xenopus tropicalis (Western clawed frog).